We begin with the raw amino-acid sequence, 226 residues long: Probable septum site-determining protein MinC (226 aa).

Belongs to the MinC family. Interacts with MinD and FtsZ.

Its function is as follows. Cell division inhibitor that blocks the formation of polar Z ring septums. Rapidly oscillates between the poles of the cell to destabilize FtsZ filaments that have formed before they mature into polar Z rings. Prevents FtsZ polymerization. The protein is Probable septum site-determining protein MinC of Bacillus velezensis (strain DSM 23117 / BGSC 10A6 / LMG 26770 / FZB42) (Bacillus amyloliquefaciens subsp. plantarum).